The chain runs to 276 residues: CASP-like protein 4A3 (276 aa).

Positions 1–13 are enriched in polar residues; it reads MPSMSPSSISTEK. The segment at 1 to 76 is disordered; the sequence is MPSMSPSSIS…PVKIEETPSP (76 aa). Topologically, residues 1 to 126 are cytoplasmic; sequence MPSMSPSSIS…RRSRREEIVK (126 aa). A compositionally biased stretch (basic and acidic residues) spans 43-72; sequence SLDHSSDSEKEDEKRRPESRRNKNPVKIEE. Residues 127 to 147 form a helical membrane-spanning segment; the sequence is FVALGFRLSEVVLALISFSIM. The Extracellular portion of the chain corresponds to 148-167; it reads AADKTKGWSGDSFDRYKEYR. The chain crosses the membrane as a helical span at residues 168-188; sequence FCLSVNVVAFIYASFQACDLA. Over 189–205 the chain is Cytoplasmic; the sequence is YHLVKEKHLISHHLRPL. The helical transmembrane segment at 206 to 226 threads the bilayer; the sequence is FEFIIDQVLAYLLMCASTAAV. Over 227–244 the chain is Extracellular; sequence TRVDDWVSNWGKDDFTEM. A helical membrane pass occupies residues 245 to 265; the sequence is ASASIAMSFLTFLAFAFSSLI. Residues 266-276 are Cytoplasmic-facing; the sequence is SGYNLFNQDSL.

It belongs to the Casparian strip membrane proteins (CASP) family. In terms of assembly, homodimer and heterodimers.

Its subcellular location is the cell membrane. The chain is CASP-like protein 4A3 from Arabidopsis lyrata subsp. lyrata (Lyre-leaved rock-cress).